A 328-amino-acid chain; its full sequence is Tetraacyldisaccharide 4'-kinase (328 aa).

55–62 (TAGGNGKT) contributes to the ATP binding site.

It belongs to the LpxK family.

The catalysed reaction is a lipid A disaccharide + ATP = a lipid IVA + ADP + H(+). It functions in the pathway glycolipid biosynthesis; lipid IV(A) biosynthesis; lipid IV(A) from (3R)-3-hydroxytetradecanoyl-[acyl-carrier-protein] and UDP-N-acetyl-alpha-D-glucosamine: step 6/6. Functionally, transfers the gamma-phosphate of ATP to the 4'-position of a tetraacyldisaccharide 1-phosphate intermediate (termed DS-1-P) to form tetraacyldisaccharide 1,4'-bis-phosphate (lipid IVA). This is Tetraacyldisaccharide 4'-kinase from Escherichia coli O81 (strain ED1a).